A 79-amino-acid polypeptide reads, in one-letter code: U-myrmeciitoxin(01)-Mg9a (79 aa).

The signal sequence occupies residues 1-21; sequence MKLSCLLLTLAIIFVLTIVHA. Residues 22 to 48 constitute a propeptide that is removed on maturation; it reads PNVEAKALANPESDAIGFADAVGEADP. Glutamine amide is present on Q78.

In terms of tissue distribution, expressed by the venom gland.

The protein resides in the secreted. In terms of biological role, may have antimicrobial properties, like most ant linear peptides. The protein is U-myrmeciitoxin(01)-Mg9a of Myrmecia gulosa (Red bulldog ant).